The following is a 364-amino-acid chain: Zinc finger protein CONSTANS-LIKE 12 (364 aa).

Zn(2+) is bound by residues Cys-5, Cys-8, Cys-28, and His-33. The segment at 5–47 (CDHCATSQALIYCKSDLAKLCLNCDVHVHSANPLSHRHIRSLI) adopts a B box-type 1; atypical zinc-finger fold. A B box-type 2; degenerate zinc finger spans residues 48–88 (CEKCFSQPAAIRCLDEKVSYCQGCHWHESNCSELGHRVQSL). The 43-residue stretch at 280-322 (QDCGMSPGFIMSEAPWETNFEVSCPQARNEAKLRYKEKKLKRS) folds into the CCT domain.

The protein belongs to the CONSTANS family.

It localises to the nucleus. This Arabidopsis thaliana (Mouse-ear cress) protein is Zinc finger protein CONSTANS-LIKE 12 (COL12).